The primary structure comprises 435 residues: Eukaryotic peptide chain release factor subunit 1 (435 aa).

This sequence belongs to the eukaryotic release factor 1 family. In terms of assembly, heterodimer of two subunits, one of which binds GTP.

It is found in the cytoplasm. Its function is as follows. Directs the termination of nascent peptide synthesis (translation) in response to the termination codons UAA, UAG and UGA. This Podospora anserina (Pleurage anserina) protein is Eukaryotic peptide chain release factor subunit 1 (SU2).